The primary structure comprises 538 residues: MATGRLGVGETLQALNAAVGPGSPVWFKETHARHLRVRDFLAPRSALQARFRDGQVPECVFRAVSCLQGPGVAPVLRCAPTPAGLSLQLQRPAVFEHVLGALASYATPAKPASPGPRVILHCPALRCNPDTLRLSQLRAVLVADHLVRVLRAHGVRVCTVPPVRDPHMSTFLQKLRVEWPSASKNTSTETLRTCVLAKFNVSKEETLPPGVLGRLCLKELVEQRHAAGYDPSIDHCLVTEDLLSVLSELQEAARHWPEDGHPAPVGGPDAGVDDCVVIHVVSCEEAFQQQKLDLLWQKVDDQVPHRQKHLVCGPVKVAGVPGTQMTAPEYHRLRHAQVCKASAQKHGGDLAQDPAWTETFDILSVATIKFEMLSTAPQGQLLLAHSTISTKGTKSGTFVMYNCARLATLFEGYKHGMEQGLYPTFPLVSSLDFSLLHDEGEWLLLFNSVLPFLDLLSQTVSLASTPGLHIPVRTEMVCKFLVQLSMDFSSYYNRVHILGEPRPHLFGQMFARLQLLRAVREVFHTGLAMLGLPPLSHI.

As to quaternary structure, part of a complex containing tRNA(Arg) and METTL2. Interacts with tRNA(Arg)(CCU) and tRNA(Arg)(UCU). Interacts with METTL2.

Functionally, involved in tRNA methylation. Facilitates the recognition and targeting of tRNA(Arg)(CCU) and tRNA(Arg)(UCU) substrates for N(3)-methylcytidine modification by METTL2. The sequence is that of DALR anticodon-binding domain-containing protein 3 (Dalrd3) from Rattus norvegicus (Rat).